The chain runs to 518 residues: Putative succinate-semialdehyde dehydrogenase [NADP(+)] 2 (518 aa).

NADP(+) contacts are provided by residues 157–158 (WN), 181–184 (KPDS), and 232–233 (GS). Glutamate 254 serves as the catalytic Proton acceptor. Leucine 255 provides a ligand contact to NADP(+). Cysteine 288 functions as the Nucleophile in the catalytic mechanism. Glutamate 386 contributes to the NADP(+) binding site.

It belongs to the aldehyde dehydrogenase family.

The enzyme catalyses succinate semialdehyde + NADP(+) + H2O = succinate + NADPH + 2 H(+). Functionally, catalyzes the NADP(+)-dependent oxidation of succinate semialdehyde to succinate. Although it has succinate semialdehyde dehydrogenase activity, is likely to act physiologically on a different aldehyde(s). The sequence is that of Putative succinate-semialdehyde dehydrogenase [NADP(+)] 2 (gabD2) from Mycobacterium bovis (strain ATCC BAA-935 / AF2122/97).